We begin with the raw amino-acid sequence, 394 residues long: Phosphoglycerate kinase (394 aa).

Substrate contacts are provided by residues 21 to 23 (DFN), Arg36, 59 to 62 (HLGR), Arg118, and Arg151. A Phosphoserine modification is found at Ser183. ATP contacts are provided by Lys201 and Gly292. At Thr299 the chain carries Phosphothreonine. Residues Glu323 and 350 to 353 (GGDS) each bind ATP.

Belongs to the phosphoglycerate kinase family. Monomer.

It localises to the cytoplasm. It carries out the reaction (2R)-3-phosphoglycerate + ATP = (2R)-3-phospho-glyceroyl phosphate + ADP. It functions in the pathway carbohydrate degradation; glycolysis; pyruvate from D-glyceraldehyde 3-phosphate: step 2/5. The chain is Phosphoglycerate kinase from Bacillus cereus (strain ZK / E33L).